The primary structure comprises 257 residues: tRNA pseudouridine synthase A (257 aa).

D53 functions as the Nucleophile in the catalytic mechanism. Y111 serves as a coordination point for substrate.

Belongs to the tRNA pseudouridine synthase TruA family. As to quaternary structure, homodimer.

The enzyme catalyses uridine(38/39/40) in tRNA = pseudouridine(38/39/40) in tRNA. Formation of pseudouridine at positions 38, 39 and 40 in the anticodon stem and loop of transfer RNAs. The protein is tRNA pseudouridine synthase A of Xanthomonas oryzae pv. oryzae (strain MAFF 311018).